Here is a 120-residue protein sequence, read N- to C-terminus: Immunoglobulin kappa variable 2-112 (120 aa).

The first 20 residues, 1–20, serve as a signal peptide directing secretion; the sequence is MRCSLQFLGVLMFWISGVSG. The framework-1 stretch occupies residues 21-43; it reads DIVITQDELSNPVTSGESVSISC. A disulfide bridge links Cys-43 with Cys-113. Positions 44 to 59 are complementarity-determining-1; that stretch reads RSSKSLLYKDGKTYLN. Residues 60-74 are framework-2; sequence WFLQRPGQSPQLLIY. The complementarity-determining-2 stretch occupies residues 75-81; that stretch reads LMSTRAS. Residues 82–113 form a framework-3 region; that stretch reads GVSDRFSGSGSGTDFTLEISRVKAEDVGVYYC. The complementarity-determining-3 stretch occupies residues 114-120; the sequence is QQLVEYP.

This Mus musculus (Mouse) protein is Immunoglobulin kappa variable 2-112.